The sequence spans 411 residues: Arginine deiminase (411 aa).

The Amidino-cysteine intermediate role is filled by cysteine 401.

The protein belongs to the arginine deiminase family.

Its subcellular location is the cytoplasm. It catalyses the reaction L-arginine + H2O = L-citrulline + NH4(+). The protein operates within amino-acid degradation; L-arginine degradation via ADI pathway; carbamoyl phosphate from L-arginine: step 1/2. The chain is Arginine deiminase from Streptococcus equi subsp. zooepidemicus (strain H70).